The primary structure comprises 1370 residues: DNA-directed RNA polymerase subunit beta (1370 aa).

This sequence belongs to the RNA polymerase beta chain family. As to quaternary structure, the RNAP catalytic core consists of 2 alpha, 1 beta, 1 beta' and 1 omega subunit. When a sigma factor is associated with the core the holoenzyme is formed, which can initiate transcription.

It catalyses the reaction RNA(n) + a ribonucleoside 5'-triphosphate = RNA(n+1) + diphosphate. Its function is as follows. DNA-dependent RNA polymerase catalyzes the transcription of DNA into RNA using the four ribonucleoside triphosphates as substrates. This is DNA-directed RNA polymerase subunit beta from Verminephrobacter eiseniae (strain EF01-2).